A 676-amino-acid chain; its full sequence is Capsid vertex component 1 (676 aa).

The span at 253–264 shows a compositional bias: low complexity; that stretch reads HPVRPSSSRVAS. A disordered region spans residues 253–308; it reads HPVRPSSSRVASGLLQSAKGHGAQTSNTDPINNGSFDGVLEPPGQGRFTGKKNNSS. Over residues 275–287 the composition is skewed to polar residues; sequence AQTSNTDPINNGS.

Belongs to the herpesviridae CVC1 protein family. In terms of assembly, interacts (via C-terminus) with capsid vertex component 2/CVC2.

It localises to the virion. Its subcellular location is the host nucleus. Capsid vertex-specific component that plays a role during viral DNA encapsidation, assuring correct genome cleavage and presumably stabilizing capsids that contain full-length viral genomes. The sequence is that of Capsid vertex component 1 from Varicella-zoster virus (strain Dumas) (HHV-3).